A 485-amino-acid polypeptide reads, in one-letter code: E3 ubiquitin-protein ligase TRIM34A (485 aa).

An RING-type zinc finger spans residues C15 to G59. Residues T91–W132 form a B box-type zinc finger. Residues C96, H99, C118, and H124 each coordinate Zn(2+). Residues V136 to S170 are a coiled coil. Residues L282 to S485 form the B30.2/SPRY domain.

The protein belongs to the TRIM/RBCC family. Homotrimer. Interacts (via B-box and SPRY domain) with TRIM5.

It is found in the cytoplasm. The protein resides in the mitochondrion. The enzyme catalyses S-ubiquitinyl-[E2 ubiquitin-conjugating enzyme]-L-cysteine + [acceptor protein]-L-lysine = [E2 ubiquitin-conjugating enzyme]-L-cysteine + N(6)-ubiquitinyl-[acceptor protein]-L-lysine.. Its pathway is protein modification; protein ubiquitination. In terms of biological role, functions as antiviral protein and contributes to the defense against retroviral infections. Acts as a capsid-specific restriction factor with the help of TRIM5 and prevents infection from non-host-adapted retroviruses. During influenza A virus infection, promotes programmed cell death by targeting ZBP1 for 'Lys-63'-linked polyubiquitination. In turn, promotes ZBP1 recruitment of RIPK3 to mediate virus-induced programmed necrosis. Negatively regulates the function of mitochondria by enhancing mitochondrial depolarization leading to cytochrome c release and mitochondria-dependent apoptosis. Also promotes the formation of multinucleated giant cells by means of cell fusion and phagocytosis in epithelial cells. Plays an essential role in sustaining the integrity of the inner mucus layer in the colon by controlling the exocytosis of the major component of colonic mucus MUC2 from colonic goblet cells. The sequence is that of E3 ubiquitin-protein ligase TRIM34A from Mus musculus (Mouse).